The chain runs to 389 residues: Phospho-N-acetylmuramoyl-pentapeptide-transferase (389 aa).

A run of 10 helical transmembrane segments spans residues Arg25 to Ile45, Thr73 to Leu93, Phe97 to Tyr117, Phe135 to Ala155, Ile190 to Ala210, Gly222 to Met242, Gly258 to Trp278, Val286 to Ile306, Ile311 to Val331, and Gln366 to Leu386.

The protein belongs to the glycosyltransferase 4 family. MraY subfamily. It depends on Mg(2+) as a cofactor.

The protein localises to the cell inner membrane. It catalyses the reaction UDP-N-acetyl-alpha-D-muramoyl-L-alanyl-gamma-D-glutamyl-meso-2,6-diaminopimeloyl-D-alanyl-D-alanine + di-trans,octa-cis-undecaprenyl phosphate = di-trans,octa-cis-undecaprenyl diphospho-N-acetyl-alpha-D-muramoyl-L-alanyl-D-glutamyl-meso-2,6-diaminopimeloyl-D-alanyl-D-alanine + UMP. It participates in cell wall biogenesis; peptidoglycan biosynthesis. In terms of biological role, catalyzes the initial step of the lipid cycle reactions in the biosynthesis of the cell wall peptidoglycan: transfers peptidoglycan precursor phospho-MurNAc-pentapeptide from UDP-MurNAc-pentapeptide onto the lipid carrier undecaprenyl phosphate, yielding undecaprenyl-pyrophosphoryl-MurNAc-pentapeptide, known as lipid I. In Burkholderia ambifaria (strain ATCC BAA-244 / DSM 16087 / CCUG 44356 / LMG 19182 / AMMD) (Burkholderia cepacia (strain AMMD)), this protein is Phospho-N-acetylmuramoyl-pentapeptide-transferase.